Here is a 34-residue protein sequence, read N- to C-terminus: Photosystem II reaction center protein M (34 aa).

The chain crosses the membrane as a helical span at residues 5–25 (ILAFIATALFILIPTAFLLIL).

It belongs to the PsbM family. PSII is composed of 1 copy each of membrane proteins PsbA, PsbB, PsbC, PsbD, PsbE, PsbF, PsbH, PsbI, PsbJ, PsbK, PsbL, PsbM, PsbT, PsbX, PsbY, PsbZ, Psb30/Ycf12, at least 3 peripheral proteins of the oxygen-evolving complex and a large number of cofactors. It forms dimeric complexes.

It localises to the plastid. Its subcellular location is the chloroplast thylakoid membrane. One of the components of the core complex of photosystem II (PSII). PSII is a light-driven water:plastoquinone oxidoreductase that uses light energy to abstract electrons from H(2)O, generating O(2) and a proton gradient subsequently used for ATP formation. It consists of a core antenna complex that captures photons, and an electron transfer chain that converts photonic excitation into a charge separation. This subunit is found at the monomer-monomer interface. This is Photosystem II reaction center protein M from Anthoceros angustus (Hornwort).